Here is a 385-residue protein sequence, read N- to C-terminus: DNA replication and repair protein RecF (385 aa).

Position 30-37 (30-37 (GRNGQGKT)) interacts with ATP.

This sequence belongs to the RecF family.

Its subcellular location is the cytoplasm. The RecF protein is involved in DNA metabolism; it is required for DNA replication and normal SOS inducibility. RecF binds preferentially to single-stranded, linear DNA. It also seems to bind ATP. This is DNA replication and repair protein RecF from Leifsonia xyli subsp. xyli (strain CTCB07).